Consider the following 267-residue polypeptide: MMSSKPTSHAEVNETIPNPYPPSSFMAPGFQQPLGSINLENQAQGAQRAQPYGITSPGIFASSQPGQGNIQMINPSVGTAVMNFKEEAKALGVIQIMVGLMHIGFGIVLCLISFSFREVLGFASTAVIGGYPFWGGLSFIISGSLSVSASKELSRCLVKGSLGMNIVSSILAFIGVILLLVDMCINGVAGQDYWAVLSGKGISATLMIFSLLEFFVACATAHFANQANTTTNMSVLVIPNMYESNPVTPASSSAPPRCNNYSANAPK.

Topologically, residues 1-91 (MMSSKPTSHA…MNFKEEAKAL (91 aa)) are cytoplasmic. Residues 92–112 (GVIQIMVGLMHIGFGIVLCLI) traverse the membrane as a helical segment. At 113–120 (SFSFREVL) the chain is on the extracellular side. Residues 121–141 (GFASTAVIGGYPFWGGLSFII) traverse the membrane as a helical segment. At 142 to 160 (SGSLSVSASKELSRCLVKG) the chain is on the cytoplasmic side. The helical transmembrane segment at 161–181 (SLGMNIVSSILAFIGVILLLV) threads the bilayer. The Extracellular segment spans residues 182-200 (DMCINGVAGQDYWAVLSGK). Residues 201–221 (GISATLMIFSLLEFFVACATA) traverse the membrane as a helical segment. Topologically, residues 222-267 (HFANQANTTTNMSVLVIPNMYESNPVTPASSSAPPRCNNYSANAPK) are cytoplasmic. The segment at 248–267 (TPASSSAPPRCNNYSANAPK) is disordered.

This sequence belongs to the MS4A family.

The protein resides in the membrane. May be involved in signal transduction as a component of a multimeric receptor complex. This chain is Membrane-spanning 4-domains subfamily A member 12 (MS4A12), found in Homo sapiens (Human).